The following is a 93-amino-acid chain: Probable chloroethene reductive dehalogenase membrane anchor protein (93 aa).

3 helical membrane-spanning segments follow: residues 3–23 (AIYFFLTIALAVGLTMLFTWF), 35–55 (WVLGILGLLLALFAIQHTYAS), and 64–84 (SAWIVGVIVLLLAVVPLLFAA).

This sequence belongs to the PceB family.

The protein localises to the cell membrane. May act as a membrane anchor for the chloroethene reductive dehalogenase VcrA. The chain is Probable chloroethene reductive dehalogenase membrane anchor protein from Dehalococcoides mccartyi (strain VS).